The following is a 207-amino-acid chain: Thymidylate kinase (207 aa).

7–14 (GCEGTGKT) is a binding site for ATP.

The protein belongs to the thymidylate kinase family.

The enzyme catalyses dTMP + ATP = dTDP + ADP. Its function is as follows. Phosphorylation of dTMP to form dTDP in both de novo and salvage pathways of dTTP synthesis. This is Thymidylate kinase from Aster yellows witches'-broom phytoplasma (strain AYWB).